A 1019-amino-acid polypeptide reads, in one-letter code: Vacuolar membrane protease (1019 aa).

Topologically, residues 1 to 69 (MFLEINFYST…DRIPTVVGFR (69 aa)) are cytoplasmic. A helical membrane pass occupies residues 70-90 (VIPTTVLVLLTYLTIFTLVIV). At 91–404 (TDWLPEPPKN…AELVIFYLND (314 aa)) the chain is on the vacuolar side. N158 is a glycosylation site (N-linked (GlcNAc...) asparagine). Positions 195 and 207 each coordinate Zn(2+). The active-site Proton acceptor is the E239. E240 is a binding site for Zn(2+). N-linked (GlcNAc...) asparagine glycosylation occurs at N256. Residues E265 and H341 each coordinate Zn(2+). The helical transmembrane segment at 405-425 (LLIYNVVSLVVGPISLIFFVV) threads the bilayer. The Cytoplasmic segment spans residues 426 to 466 (CEYVLRNERARQPNGHPVSRPSVLEWLKQRSWLRALWRRSK). A helical membrane pass occupies residues 467–487 (FWIALVITIALQALLVWGYLA). At 488–497 (FNSFTVYSSP) the chain is on the vacuolar side. The chain crosses the membrane as a helical span at residues 498–518 (YLVLISFFSLAYLSLVIPLTF). The Cytoplasmic segment spans residues 519–539 (TFNQTQSPTAKYIAPEREKHT). Residues 540-560 (LLIQVYIFTWILLLFSTIAVA) traverse the membrane as a helical segment. Topologically, residues 561–565 (RAQVG) are vacuolar. Residues 566 to 586 (GLYFVTAWNTGVWIACLLAAV) traverse the membrane as a helical segment. Residues 587-651 (EGMMLPVPQG…ASLRKPQEGG (65 aa)) lie on the Cytoplasmic side of the membrane. The interval 603 to 634 (HSAHHHHHHEHEEDQDADDDDREQRQPPTEAT) is disordered. Residues 652–672 (VVGWWIVHLLLTIPAPVLLIA) traverse the membrane as a helical segment. Topologically, residues 673–692 (QMGSLLLDSLPQTLADGSPA) are vacuolar. The helical transmembrane segment at 693–713 (YVVYAAASLTAVLLAVPLTPF) threads the bilayer. The Cytoplasmic portion of the chain corresponds to 714-719 (SGKLHR). Residues 720–740 (GLFFLFFLSFLIVTAYLWLAF) form a helical membrane-spanning segment. Topologically, residues 741–1019 (PFSSADPLKV…LVEAWSPFSV (279 aa)) are vacuolar. The N-linked (GlcNAc...) asparagine glycan is linked to N774.

The protein belongs to the peptidase M28 family. Requires Zn(2+) as cofactor.

Its subcellular location is the vacuole membrane. Its function is as follows. May be involved in vacuolar sorting and osmoregulation. In Laccaria bicolor (strain S238N-H82 / ATCC MYA-4686) (Bicoloured deceiver), this protein is Vacuolar membrane protease.